The primary structure comprises 207 residues: Uracil phosphoribosyltransferase (207 aa).

5-phospho-alpha-D-ribose 1-diphosphate is bound by residues Arg77, Arg102, and 129–137 (DPMLATGGS). Residues Ile192 and 197–199 (GDA) contribute to the uracil site. Asp198 contributes to the 5-phospho-alpha-D-ribose 1-diphosphate binding site.

This sequence belongs to the UPRTase family. Requires Mg(2+) as cofactor.

It carries out the reaction UMP + diphosphate = 5-phospho-alpha-D-ribose 1-diphosphate + uracil. Its pathway is pyrimidine metabolism; UMP biosynthesis via salvage pathway; UMP from uracil: step 1/1. With respect to regulation, allosterically activated by GTP. Functionally, catalyzes the conversion of uracil and 5-phospho-alpha-D-ribose 1-diphosphate (PRPP) to UMP and diphosphate. The sequence is that of Uracil phosphoribosyltransferase from Dictyoglomus thermophilum (strain ATCC 35947 / DSM 3960 / H-6-12).